A 256-amino-acid chain; its full sequence is MPYLYRIAYDGTMFYGFTGHPNSLEPRLRLIFGEILGRGSRTDPGVSAVGNVVMTGRKMALGYVNSKMPKGAWAWGIAEVPEGFNPRRAKLRRYLYVAPHWGEDVDVMREAAKLLTGTHDYSSFIQLRGEKHTPTVTTVYDIDVTLRGDLIFIYFAGRGFRNKMIRKMAWALLAAGRGVLSVDDLADLLKKPRPGAVPSAPAEGLVLLDIVYDVKFEVDFSALRKAYVYFLSKSRHLSAHAAALRAAGEALAMWES.

The Nucleophile role is filled by Asp43. Tyr94 is a substrate binding site.

It belongs to the tRNA pseudouridine synthase TruA family.

The catalysed reaction is uridine(38/39/40) in tRNA = pseudouridine(38/39/40) in tRNA. Formation of pseudouridine at positions 38, 39 and 40 in the anticodon stem and loop of transfer RNAs. This chain is tRNA pseudouridine synthase A, found in Pyrobaculum aerophilum (strain ATCC 51768 / DSM 7523 / JCM 9630 / CIP 104966 / NBRC 100827 / IM2).